The following is a 62-amino-acid chain: uncharacterized protein (62 aa).

The chain crosses the membrane as a helical span at residues 15 to 37 (FSSGVLISNFLLFNFIIISHSSL). Over residues 41 to 56 (TTTTTTTTTTTTNTKS) the composition is skewed to low complexity. A disordered region spans residues 41 to 62 (TTTTTTTTTTTTNTKSTLHRSG).

It localises to the membrane. This is an uncharacterized protein from Dictyostelium discoideum (Social amoeba).